The chain runs to 340 residues: Probable complex I intermediate-associated protein 30, mitochondrial (340 aa).

It belongs to the CIA30 family.

It is found in the mitochondrion. Its function is as follows. Chaperone protein involved in the assembly of the mitochondrial NADH:ubiquinone oxidoreductase complex (complex I). Required for normal growth and reproduction. In Caenorhabditis elegans, this protein is Probable complex I intermediate-associated protein 30, mitochondrial (nuaf-1).